Reading from the N-terminus, the 616-residue chain is Protein NRT1/ PTR FAMILY 2.11 (616 aa).

The tract at residues 1 to 22 is disordered; that stretch reads MERKPLELESTDNHQNPSSAVY. Helical transmembrane passes span 59–79, 87–107, 118–138, 159–179, 205–225, 233–253, 349–369, 392–412, 435–455, 483–503, 519–539, and 566–586; these read FEKLGIIGTLSNLLVYLTAVF, ATIINAFSGTINFGTFVAAFL, LSVAVIACFLGSFVILLTAAV, GGQIAFLLMGLGFLVVGAGGI, FFNWYFFTFTFAQILSLTLVV, WTIGLTIPAVLMFLACLIFFA, VKCIVRVLPIWFASSIYYLTI, FVIPAATYVVFLMTGMTVFIV, LQRIGTGIFFATASLVVAGFV, AMWLIPQLSLAGVAEAFAAIG, FAGSIFYVGGGVSSYLGSFLI, and LFYFMIAGILAVNFAYFLVMS.

This sequence belongs to the major facilitator superfamily. Proton-dependent oligopeptide transporter (POT/PTR) (TC 2.A.17) family. In terms of tissue distribution, expressed in roots. Detected in shoots, stems and flowers. Expressed in veins and in the root vasculature with highest expression in lateral branching points.

The protein resides in the cell membrane. Its function is as follows. High-affinity, proton-dependent glucosinolate-specific transporter. Involved in apoplasmic phloem-loading of glucosinolates and in bidirectional long-distance transport of aliphatic but not indole glucosinolates. May be involved in removal of glucosinolates from the xylem in roots. This Arabidopsis thaliana (Mouse-ear cress) protein is Protein NRT1/ PTR FAMILY 2.11 (NPF2.11).